The sequence spans 435 residues: Ribulose bisphosphate carboxylase/oxygenase activase 2, chloroplastic (435 aa).

Residues 1–56 (MAAAYSTVGAVNRAPLSLNGSGARASLVPSTAFFGSSLKKSAAKFPKASSGNFKIV) constitute a chloroplast transit peptide. 165–172 (GGKGQGKS) is a binding site for ATP.

The protein belongs to the RuBisCO activase family.

The protein localises to the plastid. The protein resides in the chloroplast stroma. Its function is as follows. Activation of RuBisCO (ribulose-1,5-bisphosphate carboxylase/oxygenase; EC 4.1.1.39) involves the ATP-dependent carboxylation of the epsilon-amino group of lysine leading to a carbamate structure. The sequence is that of Ribulose bisphosphate carboxylase/oxygenase activase 2, chloroplastic (RCA2) from Larrea tridentata (Creosote bush).